A 151-amino-acid polypeptide reads, in one-letter code: Large ribosomal subunit protein bL9 (151 aa).

The protein belongs to the bacterial ribosomal protein bL9 family.

Binds to the 23S rRNA. This Rhodococcus jostii (strain RHA1) protein is Large ribosomal subunit protein bL9.